Reading from the N-terminus, the 149-residue chain is SPbeta prophage-derived putative transcriptional regulator YosT (149 aa).

In Bacillus subtilis (strain 168), this protein is SPbeta prophage-derived putative transcriptional regulator YosT (yosT).